Reading from the N-terminus, the 652-residue chain is MENRMNELVSLLNQYAKEYYTQDNPTVSDSQYDQLYRELVELEEQHPENILPNSPTHRVGGLVLEGFEKYQHEYPLYSLQDAFSKEELIAFDKRVKAEFPTASYMAELKIDGLSVSLTYVNGILQVGATRGDGNIGENITENLKRVHDIPLHLDQSLDITVRGECYLPKESFEAINIEKRANGEQEFANPRNAAAGTLRQLNTGIVAKRKLATFLYQEASPTQKETQDDVLKELESYGFSVNHHRLISSSMEKIWDFIQTIEKDRISLPYDIDGIVIKVNSLAMQEELGFTVKAPRWAIAYKFPAEEKEAEILSVDWTVGRTGVVTPTANLTPVQLAGTTVSRATLHNVDYIAEKDIRIGDTVVVYKAGDIIPAVLNVVMSKRNQQEVMLIPKLCPSCGSELVHFEDEVALRCINPLCPNQIKERLAHFASRDAMNITGFGPSLVEKLFDAHLIADVADIYRLSIEDLLTLDGIKEKSATKIYHAIQSSKENSAEKLLFGLGIRHVGSKASRLLLEEFGNLRQLSQASQESIASIDGLGGVIAKSLHTFFEKEEVDKLLEELTSYNVNFNYLGKRVSTDAQLSGLTVVLTGKLEKMTRNEAKEKLQNLGAKVTGSVSKKTDLIVAGSDAGSKLTKAQDLGITIQDEDWLLNL.

NAD(+) is bound by residues 29–33, 78–79, and glutamate 107; these read DSQYD and SL. The active-site N6-AMP-lysine intermediate is lysine 109. NAD(+)-binding residues include arginine 130, glutamate 164, lysine 278, and lysine 302. Residues cysteine 395, cysteine 398, cysteine 413, and cysteine 418 each contribute to the Zn(2+) site. Residues 577 to 652 enclose the BRCT domain; the sequence is STDAQLSGLT…IQDEDWLLNL (76 aa).

This sequence belongs to the NAD-dependent DNA ligase family. LigA subfamily. Mg(2+) is required as a cofactor. Requires Mn(2+) as cofactor.

It carries out the reaction NAD(+) + (deoxyribonucleotide)n-3'-hydroxyl + 5'-phospho-(deoxyribonucleotide)m = (deoxyribonucleotide)n+m + AMP + beta-nicotinamide D-nucleotide.. Functionally, DNA ligase that catalyzes the formation of phosphodiester linkages between 5'-phosphoryl and 3'-hydroxyl groups in double-stranded DNA using NAD as a coenzyme and as the energy source for the reaction. It is essential for DNA replication and repair of damaged DNA. The chain is DNA ligase from Streptococcus agalactiae serotype III (strain NEM316).